The following is a 194-amino-acid chain: MAVTTSMSFNLMASFRGMSLSSSSSSSFFKGEFGPSSLRLPNKSPLSVSPFPLTIESAHKKGAGSTKNGRDSKGQRLGVKIYGDQVAKPGAIIIRQRGTKFHPGKNVGIGKDHTIFALIDGLVKFEKYGPDKKKVSVYPREIQPENPNSYRARKRENFRLQREKKKARREGYSFQPQLILASAATDNADESAVC.

A chloroplast-targeting transit peptide spans 1-57 (MAVTTSMSFNLMASFRGMSLSSSSSSSFFKGEFGPSSLRLPNKSPLSVSPFPLTIES). Positions 57-76 (SAHKKGAGSTKNGRDSKGQR) are disordered.

In terms of assembly, component of the chloroplast large ribosomal subunit (LSU). Mature 70S chloroplast ribosomes of higher plants consist of a small (30S) and a large (50S) subunit. The 30S small subunit contains 1 molecule of ribosomal RNA (16S rRNA) and 24 different proteins. The 50S large subunit contains 3 rRNA molecules (23S, 5S and 4.5S rRNA) and 33 different proteins.

Its subcellular location is the plastid. The protein localises to the chloroplast. In terms of biological role, component of the chloroplast ribosome (chloro-ribosome), a dedicated translation machinery responsible for the synthesis of chloroplast genome-encoded proteins, including proteins of the transcription and translation machinery and components of the photosynthetic apparatus. In Spinacia oleracea (Spinach), this protein is Large ribosomal subunit protein bL27c (RPL27).